A 375-amino-acid polypeptide reads, in one-letter code: Chaperone protein DnaJ (375 aa).

Residues 5–70 (DYYEVLGVNR…QKKGAYDRYG (66 aa)) enclose the J domain. The segment at 134–212 (GAEKTIRIPT…CGGAGRVKKQ (79 aa)) adopts a CR-type zinc-finger fold. Cys147, Cys150, Cys164, Cys167, Cys186, Cys189, Cys200, and Cys203 together coordinate Zn(2+). 4 CXXCXGXG motif repeats span residues 147–154 (CGTCHGSG), 164–171 (CPTCGGAG), 186–193 (CPKCHGTG), and 200–207 (CGDCGGAG).

This sequence belongs to the DnaJ family. In terms of assembly, homodimer. Zn(2+) serves as cofactor.

The protein localises to the cytoplasm. Functionally, participates actively in the response to hyperosmotic and heat shock by preventing the aggregation of stress-denatured proteins and by disaggregating proteins, also in an autonomous, DnaK-independent fashion. Unfolded proteins bind initially to DnaJ; upon interaction with the DnaJ-bound protein, DnaK hydrolyzes its bound ATP, resulting in the formation of a stable complex. GrpE releases ADP from DnaK; ATP binding to DnaK triggers the release of the substrate protein, thus completing the reaction cycle. Several rounds of ATP-dependent interactions between DnaJ, DnaK and GrpE are required for fully efficient folding. Also involved, together with DnaK and GrpE, in the DNA replication of plasmids through activation of initiation proteins. This is Chaperone protein DnaJ from Azoarcus sp. (strain BH72).